Consider the following 180-residue polypeptide: MNTRLEKFYKENVVPALMKEFGYTNPMEVPKLVKVTLNMGVGEAATNKKILENAVADMAKISGQKPVVTKSRVSVASFKIRDGWPIGCKTTLRRAKMYEFLDRLINISLPRVRDFRGVSGRSFDGRGNFNMGVKEQIIFPEIDFDAVDAIRGMDIAITTTAKTDAEAKALLAAFKFPFRN.

Belongs to the universal ribosomal protein uL5 family. As to quaternary structure, part of the 50S ribosomal subunit; part of the 5S rRNA/L5/L18/L25 subcomplex. Contacts the 5S rRNA and the P site tRNA. Forms a bridge to the 30S subunit in the 70S ribosome.

Functionally, this is one of the proteins that bind and probably mediate the attachment of the 5S RNA into the large ribosomal subunit, where it forms part of the central protuberance. In the 70S ribosome it contacts protein S13 of the 30S subunit (bridge B1b), connecting the 2 subunits; this bridge is implicated in subunit movement. Contacts the P site tRNA; the 5S rRNA and some of its associated proteins might help stabilize positioning of ribosome-bound tRNAs. In Xanthomonas euvesicatoria pv. vesicatoria (strain 85-10) (Xanthomonas campestris pv. vesicatoria), this protein is Large ribosomal subunit protein uL5.